Reading from the N-terminus, the 602-residue chain is Zinc finger MYND domain-containing protein 11 (602 aa).

An SAMD1-like winged helix (WH) domain is found at Lys6 to Gln82. The PHD-type zinc-finger motif lies at Asp100–Ile148. A Bromo domain is found at Lys149–Leu255. Zn(2+) is bound by residues Cys258, Cys261, Cys277, and His281. A PWWP domain is found at Asn280–Asn331. Lys366 participates in a covalent cross-link: Glycyl lysine isopeptide (Lys-Gly) (interchain with G-Cter in SUMO2). Residues Lys366–Asn459 are disordered. A Nuclear localization signal motif is present at residues Arg394–Arg400. Glycyl lysine isopeptide (Lys-Gly) (interchain with G-Cter in SUMO2) cross-links involve residues Lys407 and Lys408. The residue at position 421 (Ser421) is a Phosphoserine. Polar residues predominate over residues Ser435–Asn459. The tract at residues His452 to Tyr572 is interaction with human adenovirus E1A. Residues Cys563, Cys566, Cys574, Cys575, Cys581, Cys585, His594, and Cys598 each contribute to the Zn(2+) site. An MYND-type zinc finger spans residues Cys563–Cys598.

Homooligomer; forms homooligomers via its C-terminus. Interacts with histone H3.3 trimethylated at 'Lys-36' (H3.3K36me3). Interacts (via MYND-type zinc finger) with NCOR1. Interacts (via MYND-type zinc finger) with MGA protein (via PXLXP motif). Interacts (via MYND-type zinc finger) with EZH2. Interacts with EMSY and E2F6. Interacts with PIAS1 and UBE2I. In terms of assembly, (Microbial infection) Interacts (via MYND-type zinc finger) with human adenovirus early E1A protein (via PXLXP motif); this interaction inhibits E1A mediated transactivation. As to quaternary structure, (Microbial infection) Interacts (via MYND-type zinc finger) with Epstein-Barr virus EBNA2 protein (via PXLXP motif). Interacts with Epstein-Barr virus-derived protein LMP1; leading to negatively regulate NF-kappa-B activation by Epstein-Barr virus-derived protein LMP1. Post-translationally, sumoylated following its interaction with PIAS1 and UBE2I. Ubiquitinated, leading to proteasomal degradation. Ubiquitous.

Its subcellular location is the nucleus. The protein localises to the chromosome. Chromatin reader that specifically recognizes and binds histone H3.3 trimethylated at 'Lys-36' (H3.3K36me3) and regulates RNA polymerase II elongation. Does not bind other histone H3 subtypes (H3.1 or H3.2). Colocalizes with highly expressed genes and functions as a transcription corepressor by modulating RNA polymerase II at the elongation stage. Binds non-specifically to dsDNA. Acts as a tumor-suppressor by repressing a transcriptional program essential for tumor cell growth. In terms of biological role, (Microbial infection) Inhibits Epstein-Barr virus EBNA2-mediated transcriptional activation and host cell proliferation, through direct interaction. The sequence is that of Zinc finger MYND domain-containing protein 11 from Homo sapiens (Human).